Consider the following 284-residue polypeptide: tRNA dimethylallyltransferase (284 aa).

Residue 6 to 13 (GPTASGKS) coordinates ATP. Residue 8 to 13 (TASGKS) coordinates substrate. The segment at 31 to 34 (DSLS) is interaction with substrate tRNA.

This sequence belongs to the IPP transferase family. Monomer. It depends on Mg(2+) as a cofactor.

The catalysed reaction is adenosine(37) in tRNA + dimethylallyl diphosphate = N(6)-dimethylallyladenosine(37) in tRNA + diphosphate. Catalyzes the transfer of a dimethylallyl group onto the adenine at position 37 in tRNAs that read codons beginning with uridine, leading to the formation of N6-(dimethylallyl)adenosine (i(6)A). The polypeptide is tRNA dimethylallyltransferase (Nautilia profundicola (strain ATCC BAA-1463 / DSM 18972 / AmH)).